A 205-amino-acid chain; its full sequence is Allergen Asp f 15 homolog (205 aa).

The protein belongs to the cerato-platanin family.

The protein localises to the secreted. The polypeptide is Allergen Asp f 15 homolog (Arthroderma benhamiae (strain ATCC MYA-4681 / CBS 112371) (Trichophyton mentagrophytes)).